The primary structure comprises 198 residues: Na(+)-translocating NADH-quinone reductase subunit E (198 aa).

Transmembrane regions (helical) follow at residues 11-31 (SIFI…FLAV), 35-55 (VSTA…AVPA), 77-97 (FLNF…LEMI), 110-130 (GIFL…SFMV), 140-160 (VVYG…LAGI), and 176-196 (LGIT…FSGI).

The protein belongs to the NqrDE/RnfAE family. In terms of assembly, composed of six subunits; NqrA, NqrB, NqrC, NqrD, NqrE and NqrF.

The protein localises to the cell inner membrane. It catalyses the reaction a ubiquinone + n Na(+)(in) + NADH + H(+) = a ubiquinol + n Na(+)(out) + NAD(+). NQR complex catalyzes the reduction of ubiquinone-1 to ubiquinol by two successive reactions, coupled with the transport of Na(+) ions from the cytoplasm to the periplasm. NqrA to NqrE are probably involved in the second step, the conversion of ubisemiquinone to ubiquinol. The chain is Na(+)-translocating NADH-quinone reductase subunit E from Glaesserella parasuis serovar 5 (strain SH0165) (Haemophilus parasuis).